The chain runs to 818 residues: Protocadherin beta-1 (818 aa).

The first 28 residues, 1–28, serve as a signal peptide directing secretion; the sequence is MAGTRRKSLQNRQVGSLLIFLCISVGDA. The Extracellular portion of the chain corresponds to 29–691; it reads TTIRYSVAEE…RKVNPSTKYL (663 aa). Cadherin domains are found at residues 35 to 133, 138 to 242, 243 to 347, 348 to 452, and 457 to 562; these read VAEE…APVF, PLLK…VPQF, SRLV…PPEV, MVSS…PPIF, and YILT…RPMI. N169, N209, N257, and N419 each carry an N-linked (GlcNAc...) asparagine glycan. Residue N568 is glycosylated (N-linked (GlcNAc...) asparagine). Residues 577-672 form the Cadherin 6 domain; sequence VPRSAEAGYL…LVDGFSEPYL (96 aa). A helical transmembrane segment spans residues 692–712; sequence VISLVILSFLFLLSVIVIFII. Topologically, residues 713–818 are cytoplasmic; it reads HVYQKIKYRE…GHDQVSDDYM (106 aa). Positions 789–818 are disordered; sequence MEAGSSLPPNSDRNKSQRLEGHDQVSDDYM. Residues 800-818 show a composition bias toward basic and acidic residues; it reads DRNKSQRLEGHDQVSDDYM.

The protein localises to the cell membrane. Its function is as follows. Potential calcium-dependent cell-adhesion protein. May be involved in the establishment and maintenance of specific neuronal connections in the brain. The polypeptide is Protocadherin beta-1 (PCDHB1) (Homo sapiens (Human)).